We begin with the raw amino-acid sequence, 931 residues long: Chitin synthase III (931 aa).

2 N-linked (GlcNAc...) asparagine glycosylation sites follow: N37 and N94. Residues P93–L154 are disordered. The span at G102–G122 shows a compositional bias: gly residues. Residue N558 is glycosylated (N-linked (GlcNAc...) asparagine). A run of 5 helical transmembrane segments spans residues F585 to L605, I644 to A664, I677 to L697, V731 to L751, and S759 to F779. N-linked (GlcNAc...) asparagine glycosylation occurs at N802. 2 helical membrane passes run T858–D878 and F899–L919.

Belongs to the chitin synthase family. Class III subfamily. In terms of tissue distribution, highly expressed in conidia and during appressorium formation.

It is found in the cell membrane. It catalyses the reaction [(1-&gt;4)-N-acetyl-beta-D-glucosaminyl](n) + UDP-N-acetyl-alpha-D-glucosamine = [(1-&gt;4)-N-acetyl-beta-D-glucosaminyl](n+1) + UDP + H(+). Polymerizes chitin, a structural polymer of the cell wall and septum, by transferring the sugar moiety of UDP-GlcNAc to the non-reducing end of the growing chitin polymer. Contributes to the production of conidia and the ability of fungal conidia to germinate. Involved in the fungal cell wall integrity and the ability of conidia to withstand biophysical pressure. Required for appressorium formation and evasion of insect cellular and/or humoral defenses, promoting the fungal dimorphic transition to the production of hyphal bodies that occurs within hosts, and ultimately to virulence. This Metarhizium acridum (strain CQMa 102) protein is Chitin synthase III.